A 68-amino-acid chain; its full sequence is MAVPFRRTGKTAKRKRRTHYKLSNPALVLCKETNAFTLSHRVTKNSGYYKGKLILENKPSKAQKTTDN.

Belongs to the bacterial ribosomal protein bL32 family.

This Aster yellows witches'-broom phytoplasma (strain AYWB) protein is Large ribosomal subunit protein bL32.